We begin with the raw amino-acid sequence, 152 residues long: Ribosome maturation factor RimP (152 aa).

Belongs to the RimP family.

It is found in the cytoplasm. In terms of biological role, required for maturation of 30S ribosomal subunits. The chain is Ribosome maturation factor RimP from Burkholderia cenocepacia (strain ATCC BAA-245 / DSM 16553 / LMG 16656 / NCTC 13227 / J2315 / CF5610) (Burkholderia cepacia (strain J2315)).